Consider the following 475-residue polypeptide: MLVQYQNLPVQNIPVLLLSCGFLAILFRSLVLRVRYYRKAQAWGCKPVPSRFQWDPFWGLDLVWSQWKALRGHYYIPWLSDLHKGQPKTFQITFQGARVIHTIEPENLKCLTAINWKDFGISPLRRGKKAGHPFADRGVNSVDGEDWVFSRSLIKPFFMREVYANTERLLPHTDHLLRIMPPDGETFNIQPYLQRWFLDVTTQFIFGAPMDALTHPERARVTWAMLDVLRGTRLRLQLYRVMHLIDWSWWLRAIKIIHEFMDERIDRVYADIAEHQKRIQAGEDVGPERLDLLWHMALGCPDHVELRSQLSLLFVPNNDTTSILTANVIWHLARNSKAWGKVRAEVLAHGDAPLTFEALRGMKYLQASINETHRLNPNNVTQVRMCVNDTTLPLGGGTDGRSPILIRKGDIVQVTKTVMQKDPLYWGEDPDVYRPERFEEKTHFWEFVPFGGGPRRCPAHMMVQTESAYLIARLA.

Residues 10–32 (VQNIPVLLLSCGFLAILFRSLVL) form a helical membrane-spanning segment. Position 457 (cysteine 457) interacts with heme.

The protein belongs to the cytochrome P450 family. Requires heme as cofactor.

It localises to the membrane. Its pathway is secondary metabolite biosynthesis. Its function is as follows. Cytochrome P450 monooxygenase; part of the gene cluster that mediates the biosynthesis of oxopyrrolidines, polyketide-amino acid hybrid compounds with feature structures of tetramic acid. Does not seem to play a role in oxopyrrolidines A and B biosynthesis. May be involved in further modifications of these oxopyrrolidines. The protein is Cytochrome P450 monooxygenase opdE of Penicillium oxalicum (strain 114-2 / CGMCC 5302) (Penicillium decumbens).